Consider the following 370-residue polypeptide: Cytochrome b (370 aa).

Helical transmembrane passes span F25–V45, W69–I90, W105–L125, and F170–I190. Heme b is bound by residues H75 and H89. Residues H174 and H188 each contribute to the heme b site. An a ubiquinone-binding site is contributed by H193. The next 4 helical transmembrane spans lie at Y218–S238, L280–H300, F312–T332, and F339–P358.

Belongs to the cytochrome b family. In terms of assembly, the cytochrome bc1 complex contains 3 respiratory subunits (MT-CYB, CYC1 and UQCRFS1), 2 core proteins (UQCRC1 and UQCRC2) and probably 6 low-molecular weight proteins. It depends on heme b as a cofactor.

Its subcellular location is the mitochondrion inner membrane. In terms of biological role, component of the ubiquinol-cytochrome c reductase complex (complex III or cytochrome b-c1 complex) that is part of the mitochondrial respiratory chain. The b-c1 complex mediates electron transfer from ubiquinol to cytochrome c. Contributes to the generation of a proton gradient across the mitochondrial membrane that is then used for ATP synthesis. The protein is Cytochrome b (MT-CYB) of Eunectes murinus (Green anaconda).